A 98-amino-acid chain; its full sequence is Putative protein adenylyltransferase MJ0126 (98 aa).

The GSX(10)DXD motif motif lies at 31-45 (GSYARNEQTETSDID). Asp43, Asp45, and Asp75 together coordinate Mg(2+).

This sequence belongs to the MntA antitoxin family. In terms of assembly, probably forms a complex with cognate toxin MJ0125. The cofactor is Mg(2+).

The catalysed reaction is L-tyrosyl-[protein] + ATP = O-(5'-adenylyl)-L-tyrosyl-[protein] + diphosphate. The enzyme catalyses O-(5'-adenylyl)-L-tyrosyl-[protein] + ATP = O-[5'-(adenylyl-(5'-&gt;3')-adenylyl)]-L-tyrosyl-[protein] + diphosphate. Its function is as follows. Probable antitoxin component of a putative type VII toxin-antitoxin (TA) system. Neutralizes cognate toxic MJ0125 by di-AMPylation. In Methanocaldococcus jannaschii (strain ATCC 43067 / DSM 2661 / JAL-1 / JCM 10045 / NBRC 100440) (Methanococcus jannaschii), this protein is Putative protein adenylyltransferase MJ0126.